Reading from the N-terminus, the 538-residue chain is Cytochrome P450 monooxygenase verH (538 aa).

The helical transmembrane segment at 2-21 (VFAMLVVCWSIFLGLWMLVS) threads the bilayer. Heme is bound at residue C445.

It belongs to the cytochrome P450 family. The cofactor is heme.

Its subcellular location is the membrane. It functions in the pathway secondary metabolite biosynthesis; terpenoid biosynthesis. It participates in mycotoxin biosynthesis. Functionally, cytochrome P450 monooxygenase; part of the gene cluster that mediates the biosynthesis of the neurotoxin verrucosidin, a methylated alpha-pyrone polyketide that inhibits oxidative phosphorylation in mitochondria and thereby causes neurological diseases. The carbon backbone of verrucosidin is synthesized by the HR-PKS verA, and further modified by the other verrucodidin cluster enzymes. This is Cytochrome P450 monooxygenase verH from Penicillium polonicum.